Reading from the N-terminus, the 390-residue chain is Neutrophil cytosol factor 1 (390 aa).

Residues 4–125 form the PX domain; it reads TFIRHIALLG…DFFKVRPDDL (122 aa). 2 SH3 domains span residues 156–215 and 226–285; these read IILQ…PLDS and YAGE…KAGE. The tract at residues 291-390 is disordered; the sequence is QRQIRGRGAP…STKRKLTSAV (100 aa). Residues S304, S321, S329, and S346 each carry the phosphoserine modification. The segment covering 374–383 has biased composition (basic and acidic residues); that stretch reads ILHRCTESTK.

As to quaternary structure, component of the phagocyte NADPH oxidase complex composed of an obligatory core heterodimer formed by the membrane proteins CYBA and CYBB and the cytosolic regulatory subunits NCF1/p47-phox, NCF2/p67-phox, NCF4/p40-phox and the small GTPase RAC1 or RAC2. Part of a cytosolic complex composed at least by NCF1, NCF2 and NCF4. Interacts (via C-terminus) with NCF2 (via the C-terminal SH3 domain). Interacts with NCF4. Interacts with CYBB. Interacts (via the second SH3 domain) with CYBA; interaction is phosphorylation-dependent. Interacts with NOXA1. Interacts with ADAM15. Interacts with TRAF4. Interacts with FASLG. Interacts with PARK7 (via C-terminus); the interaction is enhanced by LPS and modulates NCF1 phosphorylation and membrane translocation. In terms of processing, phosphorylated by PRKCD; phosphorylation induces activation of NCF1, leading to assembly and activation of the NADPH oxidase complex.

It localises to the cytoplasm. Its subcellular location is the cytosol. The protein resides in the membrane. Subunit of the phagocyte NADPH oxidase complex that mediates the transfer of electrons from cytosolic NADPH to O2 to produce the superoxide anion (O2(-)). In the activated complex, electrons are first transferred from NADPH to flavin adenine dinucleotide (FAD) and subsequently transferred via two heme molecules to molecular oxygen, producing superoxide through an outer-sphere reaction. Activation of the NADPH oxidase complex is initiated by the assembly of cytosolic subunits of the NADPH oxidase complex with the core NADPH oxidase complex to form a complex at the plasma membrane or phagosomal membrane. This activation process is initiated by phosphorylation dependent binding of the cytosolic NCF1/p47-phox subunit to the C-terminus of CYBA/p22-phox. The protein is Neutrophil cytosol factor 1 of Mus musculus (Mouse).